The following is a 205-amino-acid chain: MAYEQEVWVPVTGLGKKVMAGEFASFDEILASGQPIKEAGIVDAMLPDLVDEVLCIDMMQRMTDSGRRIKFRAVVVIGNKNGYVGFGQGRDVQVGTAIKKAITNAKLNIVKVRRGCGSWECGCGMKHSVPMEVTGKAGSVAVTLKPAPKGIGLVTGDVGKKVLTLAGIQDVWVNTSGNTRTTLNFAKATYNALRETNLIRIGGRK.

Residues 49–112 (LVDEVLCIDM…TNAKLNIVKV (64 aa)) enclose the S5 DRBM domain.

This sequence belongs to the universal ribosomal protein uS5 family. Part of the 30S ribosomal subunit. Contacts protein S4.

In terms of biological role, with S4 and S12 plays an important role in translational accuracy. This Methanocorpusculum labreanum (strain ATCC 43576 / DSM 4855 / Z) protein is Small ribosomal subunit protein uS5.